The following is a 500-amino-acid chain: NAD(P)H-quinone oxidoreductase subunit 2 A, chloroplastic (500 aa).

13 helical membrane-spanning segments follow: residues 14–34 (LLLF…GLIL), 47–67 (IPWF…ALLF), 89–109 (IFQF…VEYI), 114–134 (MAIT…MFLC), 139–159 (FITI…LSGY), 173–193 (YLLM…WLYG), 217–237 (PGIS…LSPA), 285–305 (WHLL…LIAI), 313–333 (MLAY…IVGD), 344–364 (YMLF…LFGL), 385–405 (ALSL…AGFF), 408–428 (LHLF…IGLL), and 474–494 (MIVC…IIAI).

Belongs to the complex I subunit 2 family. As to quaternary structure, NDH is composed of at least 16 different subunits, 5 of which are encoded in the nucleus.

Its subcellular location is the plastid. It localises to the chloroplast thylakoid membrane. The catalysed reaction is a plastoquinone + NADH + (n+1) H(+)(in) = a plastoquinol + NAD(+) + n H(+)(out). The enzyme catalyses a plastoquinone + NADPH + (n+1) H(+)(in) = a plastoquinol + NADP(+) + n H(+)(out). Its function is as follows. NDH shuttles electrons from NAD(P)H:plastoquinone, via FMN and iron-sulfur (Fe-S) centers, to quinones in the photosynthetic chain and possibly in a chloroplast respiratory chain. The immediate electron acceptor for the enzyme in this species is believed to be plastoquinone. Couples the redox reaction to proton translocation, and thus conserves the redox energy in a proton gradient. This Pelargonium hortorum (Common geranium) protein is NAD(P)H-quinone oxidoreductase subunit 2 A, chloroplastic.